We begin with the raw amino-acid sequence, 1690 residues long: DNA-directed RNA polymerase subunit beta' (1690 aa).

Cys-63, Cys-65, Cys-78, and Cys-81 together coordinate Zn(2+). Mg(2+) is bound by residues Asp-753, Asp-755, and Asp-757. Positions 1107, 1295, 1302, and 1305 each coordinate Zn(2+).

This sequence belongs to the RNA polymerase beta' chain family. The RNAP catalytic core consists of 2 alpha, 1 beta, 1 beta' and 1 omega subunit. When a sigma factor is associated with the core the holoenzyme is formed, which can initiate transcription. Requires Mg(2+) as cofactor. It depends on Zn(2+) as a cofactor.

The enzyme catalyses RNA(n) + a ribonucleoside 5'-triphosphate = RNA(n+1) + diphosphate. Its function is as follows. DNA-dependent RNA polymerase catalyzes the transcription of DNA into RNA using the four ribonucleoside triphosphates as substrates. The sequence is that of DNA-directed RNA polymerase subunit beta' from Thermotoga maritima (strain ATCC 43589 / DSM 3109 / JCM 10099 / NBRC 100826 / MSB8).